The chain runs to 483 residues: Glutamyl-tRNA(Gln) amidotransferase subunit A (483 aa).

Residues Lys77 and Ser152 each act as charge relay system in the active site. Ser176 (acyl-ester intermediate) is an active-site residue.

Belongs to the amidase family. GatA subfamily. As to quaternary structure, heterotrimer of A, B and C subunits.

The catalysed reaction is L-glutamyl-tRNA(Gln) + L-glutamine + ATP + H2O = L-glutaminyl-tRNA(Gln) + L-glutamate + ADP + phosphate + H(+). Its function is as follows. Allows the formation of correctly charged Gln-tRNA(Gln) through the transamidation of misacylated Glu-tRNA(Gln) in organisms which lack glutaminyl-tRNA synthetase. The reaction takes place in the presence of glutamine and ATP through an activated gamma-phospho-Glu-tRNA(Gln). This is Glutamyl-tRNA(Gln) amidotransferase subunit A from Listeria monocytogenes serotype 4b (strain F2365).